We begin with the raw amino-acid sequence, 376 residues long: Succinyl-diaminopimelate desuccinylase (376 aa).

Residue histidine 66 coordinates Zn(2+). The active site involves aspartate 68. Aspartate 99 serves as a coordination point for Zn(2+). Catalysis depends on glutamate 133, which acts as the Proton acceptor. Residues glutamate 134, glutamate 162, and histidine 348 each coordinate Zn(2+).

It belongs to the peptidase M20A family. DapE subfamily. In terms of assembly, homodimer. Zn(2+) serves as cofactor. Requires Co(2+) as cofactor.

The enzyme catalyses N-succinyl-(2S,6S)-2,6-diaminopimelate + H2O = (2S,6S)-2,6-diaminopimelate + succinate. The protein operates within amino-acid biosynthesis; L-lysine biosynthesis via DAP pathway; LL-2,6-diaminopimelate from (S)-tetrahydrodipicolinate (succinylase route): step 3/3. In terms of biological role, catalyzes the hydrolysis of N-succinyl-L,L-diaminopimelic acid (SDAP), forming succinate and LL-2,6-diaminopimelate (DAP), an intermediate involved in the bacterial biosynthesis of lysine and meso-diaminopimelic acid, an essential component of bacterial cell walls. This chain is Succinyl-diaminopimelate desuccinylase, found in Xanthomonas oryzae pv. oryzae (strain MAFF 311018).